Reading from the N-terminus, the 494-residue chain is Adenosylhomocysteinase (494 aa).

Substrate-binding residues include Thr-72, Asp-155, and Glu-217. An NAD(+)-binding site is contributed by 218 to 220 (TTT). Positions 247 and 251 each coordinate substrate. NAD(+) contacts are provided by residues Asn-252, 281 to 286 (GYGDVG), Glu-304, Asn-339, 360 to 362 (IGH), and Asn-408.

Belongs to the adenosylhomocysteinase family. The cofactor is NAD(+).

The protein localises to the cytoplasm. The enzyme catalyses S-adenosyl-L-homocysteine + H2O = L-homocysteine + adenosine. Its pathway is amino-acid biosynthesis; L-homocysteine biosynthesis; L-homocysteine from S-adenosyl-L-homocysteine: step 1/1. In terms of biological role, may play a key role in the regulation of the intracellular concentration of adenosylhomocysteine. The polypeptide is Adenosylhomocysteinase (Nocardia farcinica (strain IFM 10152)).